A 309-amino-acid polypeptide reads, in one-letter code: Protein FdhE (309 aa).

It belongs to the FdhE family.

Its subcellular location is the cytoplasm. Functionally, necessary for formate dehydrogenase activity. The sequence is that of Protein FdhE from Escherichia coli O127:H6 (strain E2348/69 / EPEC).